The sequence spans 501 residues: Glucose-6-phosphate exchanger SLC37A2 (501 aa).

The chain crosses the membrane as a helical span at residues 19–39 (SWFRGLILLLTFLIYACYHMS). 3 N-linked (GlcNAc...) asparagine glycosylation sites follow: Asn-53, Asn-62, and Asn-68. The next 5 helical transmembrane spans lie at 88 to 108 (GGVD…SGVF), 118 to 138 (LSAG…GYFW), 145 to 165 (YFVV…PSVV), 189 to 209 (SVGN…QWGL), and 210 to 230 (SFIV…LFLI). The tract at residues 240-262 (PPQHHGEPAENQDNPEDPGNSPC) is disordered. A run of 6 helical transmembrane segments spans residues 302-322 (LCLL…PLYI), 334-354 (GDLS…AGLV), 362-382 (ATTC…YNYI), 391-411 (IVML…ITTA), 434-454 (AIID…AGLI), and 462-482 (VFYM…RLVY).

It belongs to the major facilitator superfamily. Organophosphate:Pi antiporter (OPA) (TC 2.A.1.4) family. As to expression, detected in intestine and pancreas. Lower expression is also detected in liver and kidney.

It is found in the endoplasmic reticulum membrane. It carries out the reaction D-glucose 6-phosphate(in) + phosphate(out) = D-glucose 6-phosphate(out) + phosphate(in). Its activity is regulated as follows. Inhibited by vanadate but not by chlorogenic acid. Inorganic phosphate and glucose-6-phosphate antiporter. May transport cytoplasmic glucose-6-phosphate into the lumen of the endoplasmic reticulum and translocate inorganic phosphate into the opposite direction. Independent of a lumenal glucose-6-phosphatase. May not play a role in homeostatic regulation of blood glucose levels. This Homo sapiens (Human) protein is Glucose-6-phosphate exchanger SLC37A2.